The chain runs to 957 residues: MDNQRKKRNSILKVRQETNLMDVLEDTTVATSSGATNRRVSFHQLKQVKNYDRAGGQIIDATPIKEKAYDTMSSDGNSTSHTTRLDMDITGLNSTPVTPKTQTPFNGSMDMSVENYDETARLFDITRDKTICVYEKTVETTTTKVVERVVRVPEGSSGANNDTLALFNMTDRAEVDMSVDGGSEGALKVDDTISVFNQTNVEPVDMDITVQKPLDDTMGVFRSPAIPTSSRIQKTSASTMDSQNMSMSMDMDITSNEMMAAFKSPKIMSSVLVAAVKDSDDMDLTGLVNTAAEDVADDTMAVFRTPTRAQTTIQKTSGEIPESVDMEMTGIGNSDAPDDTMAVFRTPTRAQQTVQKTSGEIPESVDMEMTLLALLQPVSDVKDNFDDVAMDITQQTLVGVSDDTMAVFKNPAAEKKTPGKPLFDESMEIESTIVCPDNVTFSETAQPENPAYHSSMLMSMASEVSEDVVVQKTSESLQQSSMRMSTTITEDVTASKNPESSTISEVQKIPEVVQKTSNGVEDIQNASETPEDVSMEITSEVVEGERGTMYQMSTMDVDSLQKTSLASPKIQMTSFTDTSEKMGGVSETSLIQTMMIEASESMECSEAPEDVTASPEGLTMAPEDVTVASNVSGIVSVSSISRRRRSQLQESLHRESPRRMALEKNLSMMSQMGGASEALAEFRQNKLKNQTTLLNDSVNTTIGANTSESIGRDIFKMNTSIRSPAHRSSTAPSPMVSKTLPESPKFHVTPFDAAIVNVIYLTPEDAETQEPIPEAFEFEKVLSAEESNVHKEIDTANWSISGAIKSNLDAEVMNIARGQAEMKFLELRGKFAKESNVEIAQKIQELESQNLELAGKIRDSQNLRVLQKQIEELQKPQFSLEEAERIENEYHETKVELLRAQAASIRRQHELLMTIREERRRLIHEIEEKDELLARLEEEDRKKKEEMVERVRGVMRA.

Repeat unit 1 spans residues 87 to 90 (MDIT). The segment at 87-393 (MDITGLNSTP…NFDDVAMDIT (307 aa)) is 8 X 4 AA repeats of M-[D/E]-[I/L/M]-[S/T]. The segment at 89–111 (ITGLNSTPVTPKTQTPFNGSMDM) is disordered. A compositionally biased stretch (polar residues) spans 91-106 (GLNSTPVTPKTQTPFN). 7 consecutive repeat copies span residues 109-112 (MDMS), 206-209 (MDIT), 251-254 (MDIT), 282-285 (MDLT), 326-329 (MEMT), 367-370 (MEMT), and 390-393 (MDIT). The interval 476–504 (SLQQSSMRMSTTITEDVTASKNPESSTIS) is disordered. A coiled-coil region spans residues 830 to 950 (KFAKESNVEI…RKKKEEMVER (121 aa)).

As to quaternary structure, component of the KNL1 complex composed of knl-1 and kbp-5. Part of the ten-subunit outer kinetochore KMN network that includes the KNL1, MIS12 and NDC80 complexes. Interacts with the protein phosphatase 1 (PP1) catalytic subunit gsp-1; the interaction is direct. Interacts with the protein phosphatase 1 (PP1) catalytic subunit gsp-2; the interaction is direct. Interacts with the MIS12 complex subunits kbp-1, kbp-2 and mis-12. Interacts with the NDC80 complex components ndc-80 and him-10. Interacts with knl-3. Interacts with kbp-3. Interacts with kbp-4. Interacts with kbp-5.

Its subcellular location is the cytoplasm. The protein localises to the cell cortex. It localises to the chromosome. It is found in the centromere. The protein resides in the kinetochore. Acts as a component of the outer kinetochore KNL1 complex that serves as a docking point for spindle assembly checkpoint components and mediates microtubule-kinetochore interactions. Kinetochores, consisting of a centromere-associated inner segment and a microtubule-contacting outer segment, play a crucial role in chromosome segregation by mediating the physical connection between centromeric DNA and spindle microtubules. The outer kinetochore is made up of the ten-subunit KMN network, comprising the MIS12, NDC80 and KNL1 complexes, and auxiliary microtubule-associated components; together they connect the outer kinetochore with the inner kinetochore, bind microtubules, and mediate interactions with mitotic checkpoint proteins that delay anaphase until chromosomes are bioriented on the spindle. Binds the protein phosphatase 1 catalytic subunits gsp-1 and gsp-2, which has a role in delaying formation of load-bearing kinetochore-microtubule attachments. Required for the recruitment of spindle-assembly checkpoint components bub-1 and mdf-1/2 to unattached kinetochores. Binds microtubules which plays a role in silencing of the spindle assembly checkpoint, but not the formation of load-bearing microtubule-kinetochore attachments. Has a role in the correct localization of the spindly-like protein spdl-1 and the RZZ complex that is composed of rod-1, czw-1 and zwl-1 to kinetochores. This chain is Outer kinetochore KNL1 complex subunit knl-1, found in Caenorhabditis briggsae.